Here is a 109-residue protein sequence, read N- to C-terminus: Nucleoid-associated protein YbaB (109 aa).

The protein belongs to the YbaB/EbfC family. Homodimer.

Its subcellular location is the cytoplasm. The protein resides in the nucleoid. In terms of biological role, binds to DNA and alters its conformation. May be involved in regulation of gene expression, nucleoid organization and DNA protection. This chain is Nucleoid-associated protein YbaB, found in Escherichia coli O8 (strain IAI1).